The chain runs to 919 residues: Probable disease resistance protein At4g27220 (919 aa).

Coiled coils occupy residues 1 to 30 (MFRS…LKRS) and 74 to 95 (VEIL…KKIS). The region spanning 121–399 (MLDKLKDCLK…AEGLLDGQHH (279 aa)) is the NB-ARC domain. ATP is bound at residue 141-148 (GMGGVGKT). LRR repeat units follow at residues 447-468 (GEGF…QDKF), 469-492 (VSSV…VIEG), 494-516 (ETLV…FLQA), 519-540 (NLRI…FSNL), 542-564 (SLRS…ESLV), 565-587 (KLQF…EALS), 588-610 (SLRY…TILQ), and 611-635 (LSSL…EREG).

Belongs to the disease resistance NB-LRR family.

Probable disease resistance protein. In Arabidopsis thaliana (Mouse-ear cress), this protein is Probable disease resistance protein At4g27220.